Consider the following 254-residue polypeptide: Trypsin 3A1 (254 aa).

A signal peptide spans Met-1–Ala-20. The propeptide at Ala-21–Arg-27 is activation peptide. The region spanning Ile-28–Glu-253 is the Peptidase S1 domain. Cys-53 and Cys-69 are oxidised to a cystine. Catalysis depends on charge relay system residues His-68 and Asp-113. 2 cysteine pairs are disulfide-bonded: Cys-178-Cys-194 and Cys-205-Cys-229. The active-site Charge relay system is the Ser-209.

Belongs to the peptidase S1 family. Midgut.

It localises to the secreted. The protein resides in the extracellular space. The enzyme catalyses Preferential cleavage: Arg-|-Xaa, Lys-|-Xaa.. Its function is as follows. Major function may be to aid in digestion of the blood meal. The protein is Trypsin 3A1 of Aedes aegypti (Yellowfever mosquito).